A 427-amino-acid chain; its full sequence is Glutamate-1-semialdehyde 2,1-aminomutase (427 aa).

The residue at position 268 (K268) is an N6-(pyridoxal phosphate)lysine.

This sequence belongs to the class-III pyridoxal-phosphate-dependent aminotransferase family. HemL subfamily. The cofactor is pyridoxal 5'-phosphate.

The protein localises to the cytoplasm. The enzyme catalyses (S)-4-amino-5-oxopentanoate = 5-aminolevulinate. It participates in porphyrin-containing compound metabolism; protoporphyrin-IX biosynthesis; 5-aminolevulinate from L-glutamyl-tRNA(Glu): step 2/2. This is Glutamate-1-semialdehyde 2,1-aminomutase from Methanococcus maripaludis (strain DSM 14266 / JCM 13030 / NBRC 101832 / S2 / LL).